A 465-amino-acid polypeptide reads, in one-letter code: MKWDKLLNDKRRRESGVTRSKNTDVRSAFENDFQRIVMSASFRRLQDKTQVFPLEKSDFVRTRLTHSMEVSTIAKSMGNMVTHTIQEENLDQDFTKDHAEKIPEILACAGLLHDMGNPPFGHFGEESIREWFRDNLATITYKNKSLAEILTPQMKEDFYYFEGNAQVLRVVSKLHYLFDQYGLNLTFATLNAVIKYPVSSLKVNKKQIKSKKLGYFYADESLFNEITTATEALDNRHPLTYLLEVADDIAYLNADLEDGVKKGIVNITQILKGFEEVEEHNKVTAACYNELKKKSERYEGQEESFIVQQWLASNVRGQLINRSLEVFYENYDAIMAGTFNDSLIDASSAEQLVQILQSLSFTYIYQDKGIVESEIAGNEIISKLLETFIPAVIYYDSETPERQTAKDKRLLTLISDNYLGCYRKNAEGESETMKLYLRLLLVTDFICGMTDSYAKDLYQRLNGLS.

Residues 1-22 form a disordered region; it reads MKWDKLLNDKRRRESGVTRSKN. The HD domain maps to 63-252; it reads RLTHSMEVST…LEVADDIAYL (190 aa).

Belongs to the dGTPase family. Type 3 subfamily.

This Listeria monocytogenes serovar 1/2a (strain ATCC BAA-679 / EGD-e) protein is Deoxyguanosinetriphosphate triphosphohydrolase-like protein.